Consider the following 343-residue polypeptide: UDP-3-O-acylglucosamine N-acyltransferase (343 aa).

The active-site Proton acceptor is the histidine 237.

The protein belongs to the transferase hexapeptide repeat family. LpxD subfamily. As to quaternary structure, homotrimer.

The enzyme catalyses a UDP-3-O-[(3R)-3-hydroxyacyl]-alpha-D-glucosamine + a (3R)-hydroxyacyl-[ACP] = a UDP-2-N,3-O-bis[(3R)-3-hydroxyacyl]-alpha-D-glucosamine + holo-[ACP] + H(+). It functions in the pathway bacterial outer membrane biogenesis; LPS lipid A biosynthesis. In terms of biological role, catalyzes the N-acylation of UDP-3-O-acylglucosamine using 3-hydroxyacyl-ACP as the acyl donor. Is involved in the biosynthesis of lipid A, a phosphorylated glycolipid that anchors the lipopolysaccharide to the outer membrane of the cell. The protein is UDP-3-O-acylglucosamine N-acyltransferase of Synechococcus sp. (strain JA-3-3Ab) (Cyanobacteria bacterium Yellowstone A-Prime).